A 1330-amino-acid chain; its full sequence is Paired amphipathic helix protein Sin3-like 3 (1330 aa).

2 PAH domains span residues 8-78 (QKLT…LPKG) and 94-164 (KRVE…LPDT). Positions 191-246 (IITPHPDHDYGTEHIDQDRERPIKKENKEHMRGTNKENEHRDARDFEPHSKKEQFL) are enriched in basic and acidic residues. The tract at residues 191-281 (IITPHPDHDY…VPSSSTYDEK (91 aa)) is disordered. Over residues 262–277 (ISNQSKLSGAVPSSST) the composition is skewed to polar residues. Residues 283–351 (AMKSYSQDLA…DSFIEFLVQC (69 aa)) form the PAH 3 domain. Disordered stretches follow at residues 373-401 (GEGKYPQPSLDNDRDQEHKRDDGLRDRDH), 718-775 (NQNV…GRTS), 789-808 (KNVVTSDEKPESKQAVSIER), 882-906 (QEMAGTSKVEREEGELSPNGDFEED), and 920-1002 (SKAN…EAEC). Positions 383 to 401 (DNDRDQEHKRDDGLRDRDH) are enriched in basic and acidic residues. Residues 723–734 (SGSSSAGESEGS) are compositionally biased toward low complexity. Residues 789-800 (KNVVTSDEKPES) are compositionally biased toward basic and acidic residues. Residues 920 to 932 (SKANDSTGNNISG) are compositionally biased toward polar residues. Composition is skewed to basic and acidic residues over residues 933 to 949 (DRSREGEPSCLETRAEN) and 956 to 968 (NAARSSEDSRNEY). Residues 980–989 (GGEDPEDDLD) are compositionally biased toward acidic residues. Ser-996 carries the post-translational modification Phosphoserine.

Interacts with ERF7 and the histone deacetylase HDA19.

The protein localises to the nucleus. In terms of biological role, acts as a transcriptional repressor. Interacts with ERF7 to repress genes in abscisic acid and drought stress responses. The heterodimer represses transcription by tethering SNL3 to DNA. This chain is Paired amphipathic helix protein Sin3-like 3 (SNL3), found in Arabidopsis thaliana (Mouse-ear cress).